A 210-amino-acid polypeptide reads, in one-letter code: Ribosomal RNA large subunit methyltransferase E (210 aa).

S-adenosyl-L-methionine-binding residues include G61, W63, D81, D97, and D122. The active-site Proton acceptor is the K162. The span at 187-196 shows a compositional bias: basic and acidic residues; sequence KPEASRKRSP. The disordered stretch occupies residues 187-210; the sequence is KPEASRKRSPEVYALGQGKRAHMK.

This sequence belongs to the class I-like SAM-binding methyltransferase superfamily. RNA methyltransferase RlmE family.

The protein resides in the cytoplasm. The catalysed reaction is uridine(2552) in 23S rRNA + S-adenosyl-L-methionine = 2'-O-methyluridine(2552) in 23S rRNA + S-adenosyl-L-homocysteine + H(+). Specifically methylates the uridine in position 2552 of 23S rRNA at the 2'-O position of the ribose in the fully assembled 50S ribosomal subunit. The protein is Ribosomal RNA large subunit methyltransferase E of Stenotrophomonas maltophilia (strain K279a).